The chain runs to 221 residues: SIN3-HDAC complex-associated factor (221 aa).

Residues 112-121 are compositionally biased toward basic and acidic residues; it reads QKEFKRHNSD. Disordered regions lie at residues 112–152 and 201–221; these read QKEF…MASG and AAAEKPEEQGPEPLPISTQEW. Residues 124 to 135 are compositionally biased toward low complexity; the sequence is STTSSASPAQSP. The segment covering 136–152 has biased composition (polar residues); sequence CYSNQSDDGSDTEMASG.

The protein belongs to the SINHCAF family. In terms of assembly, interacts with the Sin3/HDAC corepressor complex at least composed of BRMS1, BRMS1L, ING2, SAP30, SAP30L and HDAC1. Found in a complex composed of at least SINHCAF, SIN3A, HDAC1, SAP30, RBBP4, OGT and TET1. Interacts with SIN3A and OGT.

The protein resides in the nucleus. Functionally, subunit of the Sin3 deacetylase complex (Sin3/HDAC), this subunit is important for the repression of genes encoding components of the TGF-beta signaling pathway. Core component of a SIN3A complex (composed of at least SINHCAF, SIN3A, HDAC1, SAP30, RBBP4, OGT and TET1) present in embryonic stem (ES) cells. Promotes the stability of SIN3A and its presence on chromatin and is essential for maintaining the potential of ES cells to proliferate rapidly, while ensuring a short G1-phase of the cell cycle, thereby preventing premature lineage priming. This Homo sapiens (Human) protein is SIN3-HDAC complex-associated factor.